An 843-amino-acid polypeptide reads, in one-letter code: Protein P (843 aa).

A terminal protein domain (TP) region spans residues 1-177 (MPLSYQHFRR…FCGSPYSWEQ (177 aa)). Positions 178–346 (ELQHGSTSLN…YCLSHIINLL (169 aa)) are spacer. The tract at residues 249-301 (TPTRWPSGVEPSGTGHSDNLATRSTSRFHQSEVRKETNPSLSTSKGHTSTGHA) is disordered. 2 stretches are compositionally biased toward polar residues: residues 262 to 276 (TGHS…TSRF) and 286 to 299 (NPSL…TSTG). A polymerase/reverse transcriptase domain (RT) region spans residues 347–690 (EDWGPCYEHG…YMNLYPVARQ (344 aa)). A Reverse transcriptase domain is found at 357–600 (EHHIRTPRTP…YSLHFMGYII (244 aa)). The Mg(2+) site is built by aspartate 429, aspartate 551, and aspartate 552.

Belongs to the hepadnaviridae P protein family.

It catalyses the reaction DNA(n) + a 2'-deoxyribonucleoside 5'-triphosphate = DNA(n+1) + diphosphate. It carries out the reaction Endonucleolytic cleavage to 5'-phosphomonoester.. With respect to regulation, activated by host HSP70 and HSP40 in vitro to be able to bind the epsilon loop of the pgRNA. Because deletion of the RNase H region renders the protein partly chaperone-independent, the chaperones may be needed indirectly to relieve occlusion of the RNA-binding site by this domain. Inhibited by several reverse-transcriptase inhibitors: Lamivudine, Adefovir and Entecavir. Multifunctional enzyme that converts the viral RNA genome into dsDNA in viral cytoplasmic capsids. This enzyme displays a DNA polymerase activity that can copy either DNA or RNA templates, and a ribonuclease H (RNase H) activity that cleaves the RNA strand of RNA-DNA heteroduplexes in a partially processive 3'- to 5'-endonucleasic mode. Neo-synthesized pregenomic RNA (pgRNA) are encapsidated together with the P protein, and reverse-transcribed inside the nucleocapsid. Initiation of reverse-transcription occurs first by binding the epsilon loop on the pgRNA genome, and is initiated by protein priming, thereby the 5'-end of (-)DNA is covalently linked to P protein. Partial (+)DNA is synthesized from the (-)DNA template and generates the relaxed circular DNA (RC-DNA) genome. After budding and infection, the RC-DNA migrates in the nucleus, and is converted into a plasmid-like covalently closed circular DNA (cccDNA). The activity of P protein does not seem to be necessary for cccDNA generation, and is presumably released from (+)DNA by host nuclear DNA repair machinery. The sequence is that of Protein P from Homo sapiens (Human).